The sequence spans 141 residues: Transcriptional regulator MraZ (141 aa).

2 consecutive SpoVT-AbrB domains span residues 5-47 (EYNH…PNEE) and 75-118 (AADC…SKER).

This sequence belongs to the MraZ family. In terms of assembly, forms oligomers.

It localises to the cytoplasm. Its subcellular location is the nucleoid. The chain is Transcriptional regulator MraZ from Lachnoclostridium phytofermentans (strain ATCC 700394 / DSM 18823 / ISDg) (Clostridium phytofermentans).